The chain runs to 63 residues: MSKTVVRKNESLDDALRRFKRSVSRNGTLQEYRKREFYEKPSVKRKLKSEAARKRKNKRGRRY.

Residues 40–52 (KPSVKRKLKSEAA) show a composition bias toward basic and acidic residues. The interval 40 to 63 (KPSVKRKLKSEAARKRKNKRGRRY) is disordered. The span at 53–63 (RKRKNKRGRRY) shows a compositional bias: basic residues.

This sequence belongs to the bacterial ribosomal protein bS21 family.

The sequence is that of Small ribosomal subunit protein bS21 from Limosilactobacillus reuteri (strain DSM 20016) (Lactobacillus reuteri).